Here is a 482-residue protein sequence, read N- to C-terminus: NADH-quinone oxidoreductase subunit N (482 aa).

The next 13 membrane-spanning stretches (helical) occupy residues 10–30 (ALGPALPELILTVGALVLILY), 44–64 (VGAIIVLIVALFSVVSQPLGA), 77–97 (GFARVMKTLTLVGSLAALLLA), 113–133 (ILIVLSSIGMLIMASANDLIG), 166–186 (FVLGALSSGMLLYGASLVYGF), 206–226 (LGLVLGIVFVAAGVAFKLAAV), 243–265 (VTAFFASAPKMAAMAMTVRVFIG), 277–296 (IIVFIAIASMALGSFAAIGQ), 302–322 (LMAYSSIGNVGYALIGLAAGT), 328–348 (GVVVYMAIYLAMTLGAFAVIL), 374–394 (AFCLAMMMFSLAGIPPLAGFF), 397–417 (FYVFAAAIKAGLNVLAVIGVV), and 451–471 (IVLAASSVVVVLFWIVPAPLV).

It belongs to the complex I subunit 2 family. NDH-1 is composed of 14 different subunits. Subunits NuoA, H, J, K, L, M, N constitute the membrane sector of the complex.

It is found in the cell inner membrane. The enzyme catalyses a quinone + NADH + 5 H(+)(in) = a quinol + NAD(+) + 4 H(+)(out). Functionally, NDH-1 shuttles electrons from NADH, via FMN and iron-sulfur (Fe-S) centers, to quinones in the respiratory chain. The immediate electron acceptor for the enzyme in this species is believed to be ubiquinone. Couples the redox reaction to proton translocation (for every two electrons transferred, four hydrogen ions are translocated across the cytoplasmic membrane), and thus conserves the redox energy in a proton gradient. The sequence is that of NADH-quinone oxidoreductase subunit N from Methylobacterium nodulans (strain LMG 21967 / CNCM I-2342 / ORS 2060).